The sequence spans 236 residues: MGHKVNPIGLRLGINRTWDSRWFAGRHEYGKLLHEDIKIREVLEKQLKQAGISKIVIERPHKKCRVAIHTARPGVVIGKKGADIEKLRREIGKITASEVHLNIVEVRKPEIDATLVAENIAQQLERRVAFRRAMKRAVQSAMRLGAGGIRINCAGRLGGAEIARTEWYREGRVPLHTLRADIDYGVATAKTAYGTCGVKVWIYKGEILEHDPMASERRALEGGDSGGGRSRRDDRG.

One can recognise a KH type-2 domain in the interval isoleucine 39–arginine 107. Positions alanine 214–glycine 236 are disordered.

Belongs to the universal ribosomal protein uS3 family. In terms of assembly, part of the 30S ribosomal subunit. Forms a tight complex with proteins S10 and S14.

Binds the lower part of the 30S subunit head. Binds mRNA in the 70S ribosome, positioning it for translation. This Parvibaculum lavamentivorans (strain DS-1 / DSM 13023 / NCIMB 13966) protein is Small ribosomal subunit protein uS3.